Here is a 686-residue protein sequence, read N- to C-terminus: U3 small nucleolar RNA-associated protein 4 homolog (686 aa).

14 WD repeats span residues 7 to 50 (HRVR…ANYF), 51 to 92 (QEKF…QALN), 93 to 135 (IKYA…PDKI), 136 to 181 (QFER…AVHK), 182 to 226 (MIVD…SATG), 227 to 275 (TLVK…SSEK), 276 to 317 (QWVR…LMEK), 318 to 377 (VEVK…PLSK), 378 to 427 (NADH…NISL), 428 to 475 (KRVS…KHLH), 476 to 516 (AFQP…VKQL), 517 to 566 (KLHC…WSRT), 567 to 627 (VQKQ…FPPT), and 628 to 666 (NESDVIRRRTAHAFKISKIYKPLLFMDLLDERTLVAVER). Residue Lys-321 forms a Glycyl lysine isopeptide (Lys-Gly) (interchain with G-Cter in SUMO2) linkage.

In terms of assembly, interacts with HIVEP1 Interacts with NOL11. Part of the small subunit (SSU) processome, composed of more than 70 proteins and the RNA chaperone small nucleolar RNA (snoRNA) U3. May be a component of the proposed t-UTP subcomplex of the ribosomal small subunit (SSU) processome containing at least UTP4, WDR43, HEATR1, UTP15, WDR75. Post-translationally, may be phosphorylated during mitosis; may control the association of this protein with WRD43 and UTP15.

The protein localises to the nucleus. It localises to the nucleolus. Its subcellular location is the chromosome. Its function is as follows. Ribosome biogenesis factor. Involved in nucleolar processing of pre-18S ribosomal RNA. Part of the small subunit (SSU) processome, first precursor of the small eukaryotic ribosomal subunit. During the assembly of the SSU processome in the nucleolus, many ribosome biogenesis factors, an RNA chaperone and ribosomal proteins associate with the nascent pre-rRNA and work in concert to generate RNA folding, modifications, rearrangements and cleavage as well as targeted d Involved in SSU pre-rRNA processing at sites A', A0, 1 and 2b. Required for optimal pre-ribosomal RNA transcription by RNA polymerase. May be a transcriptional regulator. Functionally, (Microbial infection) Acts as a positive regulator of HIVEP1 which specifically binds to the DNA sequence 5'-GGGACTTTCC-3' found in enhancer elements of numerous viral promoters such as those of HIV-1, SV40, or CMV. The polypeptide is U3 small nucleolar RNA-associated protein 4 homolog (Homo sapiens (Human)).